The following is a 570-amino-acid chain: CDKN2A-interacting protein (570 aa).

Alanine 2 carries the post-translational modification N-acetylalanine. In terms of domain architecture, XRN2-binding (XTBD) spans 19–126 (VETLRCEGET…KVKKRGISSS (108 aa)). Residues 122 to 345 (GISSSNEGVE…TSLLMPKSSS (224 aa)) form a disordered region. Phosphoserine is present on serine 124. Residues 147–162 (VERDHGKKSAKTDRSA) show a composition bias toward basic and acidic residues. A compositionally biased stretch (low complexity) spans 167 to 183 (SSGSKGSSTKSESSGTS). Lysine 176 participates in a covalent cross-link: Glycyl lysine isopeptide (Lys-Gly) (interchain with G-Cter in SUMO1). Residues 184–198 (ARSNSGVSHQNSSTS) are compositionally biased toward polar residues. Low complexity predominate over residues 203–221 (SVCSQSSSNSSQVTSAGSG). A compositionally biased stretch (basic and acidic residues) spans 224-233 (SEPEAPDKHG). Serine 234 carries the phosphoserine modification. Low complexity-rich tracts occupy residues 234–248 (SASF…SLNS) and 271–301 (SSVS…PLLS). A compositionally biased stretch (polar residues) spans 302 to 317 (CKSSSETASSGLTTKA). Over residues 318-345 (SSEANISSSVSKNSSSSGTSLLMPKSSS) the composition is skewed to low complexity. Serine 378 carries the post-translational modification Phosphoserine. The segment at 383-407 (SQLASKSSSQSSTSQLPSKSTSQSS) is disordered. Residues 452–527 (NHGELLNAAI…SREALKLFLK (76 aa)) enclose the DRBM domain.

The protein belongs to the CARF family. In terms of assembly, interacts with CDKN2A/p14ARF, p53/TP53 and MDM2. Interacts with CHEK2 and MAPK3. Interacts with XRN2. In terms of processing, may be ubiquitinated.

It is found in the nucleus. Its subcellular location is the nucleoplasm. In terms of biological role, regulates DNA damage response and cell proliferation in a dose-dependent manner through a number of signaling pathways involved in cell proliferation, apoptosis and senescence. The protein is CDKN2A-interacting protein (Cdkn2aip) of Rattus norvegicus (Rat).